The sequence spans 245 residues: Nisin immunity protein (245 aa).

Positions 1-19 (MRRYLILIVALIGITGLSG) are cleaved as a signal peptide. Residue C20 is the site of N-palmitoyl cysteine attachment. The S-diacylglycerol cysteine moiety is linked to residue C20.

Its subcellular location is the cell membrane. In terms of biological role, involved in immunity against exogenously supplied nisin. This is Nisin immunity protein (nisI) from Lactococcus lactis subsp. lactis (Streptococcus lactis).